Here is a 541-residue protein sequence, read N- to C-terminus: Probable inorganic phosphate transporter 1-12 (541 aa).

Residues 1 to 26 (MGRQDQQLQVLNALDAAKTQWYHFTA) lie on the Cytoplasmic side of the membrane. The helical transmembrane segment at 27-47 (IIVAGMGFFTDAYDLFCISLV) threads the bilayer. Topologically, residues 48 to 70 (TKLLGRIYYTDPASPTPGSLPPN) are extracellular. The chain crosses the membrane as a helical span at residues 71-91 (IAAAVNGVALCGTLSGQLFFG). Over 92-100 (WLGDKLGRK) the chain is Cytoplasmic. The helical transmembrane segment at 101-121 (SVYGMTLLLMVICSIASGLSF) threads the bilayer. Over 122–124 (SHT) the chain is Extracellular. Residues 125–145 (PTSVMATLCFFRFWLGFGIGG) traverse the membrane as a helical segment. Residues 146-163 (DYPLSATIMSEYANKKTR) are Cytoplasmic-facing. Residues 164-184 (GAFIAAVFAMQGFGILAGGVV) form a helical membrane-spanning segment. Over 185 to 213 (TLAMSAGFQAAFPAPAYEVNAAASTVPQA) the chain is Extracellular. The helical transmembrane segment at 214 to 234 (DYVWRIILMLGALPAILTYYW) threads the bilayer. At 235 to 297 (RMKMPETARY…ARFAKRHGAH (63 aa)) the chain is on the cytoplasmic side. Residues 298–318 (LLGTAATWFLVDVAYYSQNLF) traverse the membrane as a helical segment. Topologically, residues 319-349 (QKDIFTSIHWIPKARTMSELEEVFRISRAQT) are extracellular. Residues 350–370 (LIALCGTVPGYWFTVFLIDII) form a helical membrane-spanning segment. Topologically, residues 371–374 (GRFK) are cytoplasmic. The helical transmembrane segment at 375 to 395 (IQLLGFAGMTAFMLGLAIPYH) threads the bilayer. Residues 396–403 (HWTMPGNQ) lie on the Extracellular side of the membrane. A helical transmembrane segment spans residues 404–424 (VIFVFLYGFTFFFANFGPNAT). Over 425–443 (TFIVPAEIFPARLRSTCHG) the chain is Cytoplasmic. The helical transmembrane segment at 444-464 (ISAASGKAGAIIGAFGFLYAA) threads the bilayer. The Extracellular portion of the chain corresponds to 465–484 (QPQDKAHVDAGYKPGIGVRN). Residues 485-505 (ALFVLAGCNLVGFLMTWMLVP) traverse the membrane as a helical segment. At 506–541 (ESKGKSLEEMSGEADDEEASANGGATAVNSSGVEMV) the chain is on the cytoplasmic side. A disordered region spans residues 512 to 541 (LEEMSGEADDEEASANGGATAVNSSGVEMV). Acidic residues predominate over residues 515-524 (MSGEADDEEA). Positions 532-541 (AVNSSGVEMV) are enriched in polar residues.

The protein belongs to the major facilitator superfamily. Phosphate:H(+) symporter (TC 2.A.1.9) family.

It localises to the membrane. High-affinity transporter for external inorganic phosphate. This is Probable inorganic phosphate transporter 1-12 (PHT1-12) from Oryza sativa subsp. japonica (Rice).